A 290-amino-acid polypeptide reads, in one-letter code: Glycine--tRNA ligase alpha subunit (290 aa).

Belongs to the class-II aminoacyl-tRNA synthetase family. As to quaternary structure, tetramer of two alpha and two beta subunits.

It is found in the cytoplasm. It carries out the reaction tRNA(Gly) + glycine + ATP = glycyl-tRNA(Gly) + AMP + diphosphate. The chain is Glycine--tRNA ligase alpha subunit from Maridesulfovibrio salexigens (strain ATCC 14822 / DSM 2638 / NCIMB 8403 / VKM B-1763) (Desulfovibrio salexigens).